The chain runs to 351 residues: Pentatricopeptide repeat-containing protein At2g40240, mitochondrial (351 aa).

The N-terminal 27 residues, 1–27 (MSLLRRRFVKQSVNCITFLQILAERSF), are a transit peptide targeting the mitochondrion. 6 PPR repeats span residues 106–140 (RKNAYDILISRLCKLGRIDDALIVIGDMSNGRLGL), 141–175 (TPSTYHPILCSLTRKYKIEEAWRVVESMRSKSVSM), 176–210 (DVTAYNYFLTSHCYDGELESASEVMRKIEEDGNSP), 211–245 (DSRSYDALVLGACRAGKVEAAMAILRRMEEDGVTV), 246–280 (LYSTHAHVITGLVEGGYYALGLEFVMAYAGKDLRL), and 281–315 (DSESFGFLAGKLVKRKRYEEAMIVVKEMVMRGLRM).

This sequence belongs to the PPR family. P subfamily.

The protein localises to the mitochondrion. In Arabidopsis thaliana (Mouse-ear cress), this protein is Pentatricopeptide repeat-containing protein At2g40240, mitochondrial.